Here is a 31-residue protein sequence, read N- to C-terminus: Cyclotide hyen-I (31 aa).

Residues 1 to 31 constitute a cross-link (cyclopeptide (Gly-Asp)); the sequence is GSTPCGESCVWIPCISGIVGCSCSNKVCYMD. Cystine bridges form between Cys-5/Cys-21, Cys-9/Cys-23, and Cys-14/Cys-28.

This is a cyclic peptide. As to expression, detected in seeds (at protein level).

Functionally, probably participates in a plant defense mechanism. The sequence is that of Cyclotide hyen-I from Pigea enneasperma (Spade flower).